A 486-amino-acid polypeptide reads, in one-letter code: Galactose-1-phosphate uridylyltransferase (486 aa).

The protein belongs to the galactose-1-phosphate uridylyltransferase type 2 family.

It is found in the cytoplasm. It carries out the reaction alpha-D-galactose 1-phosphate + UDP-alpha-D-glucose = alpha-D-glucose 1-phosphate + UDP-alpha-D-galactose. The protein operates within carbohydrate metabolism; galactose metabolism. This Pediococcus pentosaceus (strain ATCC 25745 / CCUG 21536 / LMG 10740 / 183-1w) protein is Galactose-1-phosphate uridylyltransferase.